The sequence spans 320 residues: GTP 3',8-cyclase (320 aa).

The Radical SAM core domain maps to 5–225 (QFDRKINYLR…IQLIKKDEKA (221 aa)). Position 14 (Arg14) interacts with GTP. [4Fe-4S] cluster is bound by residues Cys21 and Cys25. Tyr27 is an S-adenosyl-L-methionine binding site. Residue Cys28 coordinates [4Fe-4S] cluster. Arg64 serves as a coordination point for GTP. Gly68 is an S-adenosyl-L-methionine binding site. Thr95 serves as a coordination point for GTP. Ser119 contributes to the S-adenosyl-L-methionine binding site. Lys155 is a binding site for GTP. Met189 provides a ligand contact to S-adenosyl-L-methionine. [4Fe-4S] cluster is bound by residues Cys248 and Cys251. 253–255 (RIR) serves as a coordination point for GTP. Cys265 provides a ligand contact to [4Fe-4S] cluster.

The protein belongs to the radical SAM superfamily. MoaA family. In terms of assembly, monomer and homodimer. It depends on [4Fe-4S] cluster as a cofactor.

The catalysed reaction is GTP + AH2 + S-adenosyl-L-methionine = (8S)-3',8-cyclo-7,8-dihydroguanosine 5'-triphosphate + 5'-deoxyadenosine + L-methionine + A + H(+). The protein operates within cofactor biosynthesis; molybdopterin biosynthesis. Its function is as follows. Catalyzes the cyclization of GTP to (8S)-3',8-cyclo-7,8-dihydroguanosine 5'-triphosphate. The chain is GTP 3',8-cyclase from Campylobacter jejuni subsp. doylei (strain ATCC BAA-1458 / RM4099 / 269.97).